Reading from the N-terminus, the 288-residue chain is Male determiner protein Nix (288 aa).

3 consecutive RRM domains span residues 19–94, 108–179, and 205–282; these read YCIY…LPLS, IVVY…KVER, and RSIG…FVPE.

Male determiner protein (M-factor) that controls male somatic sexual differentiation. Acts as a dominant factor that regulates the mRNA splicing of doublesex (dsx) or fruitless (fru) transcripts and promotes expression of male splice forms of dsx and fru. The chain is Male determiner protein Nix from Aedes aegypti (Yellowfever mosquito).